Consider the following 504-residue polypeptide: Maturase K (504 aa).

It belongs to the intron maturase 2 family. MatK subfamily.

It is found in the plastid. The protein localises to the chloroplast. Functionally, usually encoded in the trnK tRNA gene intron. Probably assists in splicing its own and other chloroplast group II introns. In Rorippa amphibia (Great yellow-cress), this protein is Maturase K.